The primary structure comprises 319 residues: Glutathione synthetase (319 aa).

The ATP-grasp domain maps to 125-311 (KLFTAWFPEL…ITGMLMDAIE (187 aa)). 151–207 (HQEHGDIILKPLDGMGGTSIFRVKQDDPNLSVIIETLTELSSRFCMAQNFLPAIKEG) serves as a coordination point for ATP. 2 residues coordinate Mg(2+): Glu281 and Asn283.

It belongs to the prokaryotic GSH synthase family. Mg(2+) is required as a cofactor. Mn(2+) serves as cofactor.

It carries out the reaction gamma-L-glutamyl-L-cysteine + glycine + ATP = glutathione + ADP + phosphate + H(+). Its pathway is sulfur metabolism; glutathione biosynthesis; glutathione from L-cysteine and L-glutamate: step 2/2. In Yersinia pestis, this protein is Glutathione synthetase.